We begin with the raw amino-acid sequence, 212 residues long: ER lumen protein-retaining receptor 2 (212 aa).

The Lumenal segment spans residues 1–4 (MNVF). Residues 5-24 (RLSGDLCHLAAIIILLLKIW) traverse the membrane as a helical segment. Residues 25–32 (NSRSCAGI) are Cytoplasmic-facing. The helical transmembrane segment at 33–52 (SGKSQLLFAMVFTTRYLDLF) threads the bilayer. The segment at 47 to 48 (RY) is interaction with the K-D-E-L motif on target proteins. Residues 53 to 58 (TSFISL) lie on the Lumenal side of the membrane. Residues 59-79 (YNTSMKVIYMGCAYATVYLIY) form a helical membrane-spanning segment. Topologically, residues 80-92 (MKFKATYDGNHDT) are cytoplasmic. A helical membrane pass occupies residues 93 to 110 (FRVEFLVVPVGGLSVLVN). Residues 111–116 (HDFSPL) are Lumenal-facing. The chain crosses the membrane as a helical span at residues 117 to 135 (EILWTFSIYLESVAILPQL). Topologically, residues 136-149 (FMISKTGEAETITT) are cytoplasmic. Residues 150 to 168 (HYLFFLGLYRALYLFNWIW) traverse the membrane as a helical segment. The interval 159–169 (RALYLFNWIWR) is interaction with the K-D-E-L motif on target proteins. At 169–178 (RFSFEGFFDL) the chain is on the lumenal side. Residues 179–199 (IAIVAGVVQTILYCDFFYLYV) form a helical membrane-spanning segment. At 200-212 (TKVLKGKKLSLPA) the chain is on the cytoplasmic side. Residues 204–207 (KGKK) form an important for recycling of cargo proteins with the sequence motif K-D-E-L from the Golgi to the endoplasmic reticulum region.

It belongs to the ERD2 family.

It is found in the endoplasmic reticulum membrane. It localises to the golgi apparatus membrane. The protein localises to the cytoplasmic vesicle. Its subcellular location is the COPI-coated vesicle membrane. Receptor for the C-terminal sequence motif K-D-E-L that is present on endoplasmic reticulum resident proteins and that mediates their recycling from the Golgi back to the endoplasmic reticulum. Binding is pH dependent, and is optimal at pH 5-5.4. The chain is ER lumen protein-retaining receptor 2 (kdelr2) from Xenopus laevis (African clawed frog).